Reading from the N-terminus, the 103-residue chain is Pyrimidine/purine nucleoside phosphorylase (103 aa).

This sequence belongs to the nucleoside phosphorylase PpnP family.

The enzyme catalyses a purine D-ribonucleoside + phosphate = a purine nucleobase + alpha-D-ribose 1-phosphate. It catalyses the reaction adenosine + phosphate = alpha-D-ribose 1-phosphate + adenine. The catalysed reaction is cytidine + phosphate = cytosine + alpha-D-ribose 1-phosphate. It carries out the reaction guanosine + phosphate = alpha-D-ribose 1-phosphate + guanine. The enzyme catalyses inosine + phosphate = alpha-D-ribose 1-phosphate + hypoxanthine. It catalyses the reaction thymidine + phosphate = 2-deoxy-alpha-D-ribose 1-phosphate + thymine. The catalysed reaction is uridine + phosphate = alpha-D-ribose 1-phosphate + uracil. It carries out the reaction xanthosine + phosphate = alpha-D-ribose 1-phosphate + xanthine. In terms of biological role, catalyzes the phosphorolysis of diverse nucleosides, yielding D-ribose 1-phosphate and the respective free bases. Can use uridine, adenosine, guanosine, cytidine, thymidine, inosine and xanthosine as substrates. Also catalyzes the reverse reactions. The protein is Pyrimidine/purine nucleoside phosphorylase of Shewanella oneidensis (strain ATCC 700550 / JCM 31522 / CIP 106686 / LMG 19005 / NCIMB 14063 / MR-1).